Here is a 485-residue protein sequence, read N- to C-terminus: Glutamate--tRNA ligase (485 aa).

A 'HIGH' region motif is present at residues 11-21 (PSPTGHLHIGN). The short motif at 252-256 (KLSKR) is the 'KMSKS' region element. Lys-255 is a binding site for ATP.

Belongs to the class-I aminoacyl-tRNA synthetase family. Glutamate--tRNA ligase type 1 subfamily. In terms of assembly, monomer.

Its subcellular location is the cytoplasm. It catalyses the reaction tRNA(Glu) + L-glutamate + ATP = L-glutamyl-tRNA(Glu) + AMP + diphosphate. Its function is as follows. Catalyzes the attachment of glutamate to tRNA(Glu) in a two-step reaction: glutamate is first activated by ATP to form Glu-AMP and then transferred to the acceptor end of tRNA(Glu). The polypeptide is Glutamate--tRNA ligase (Bacillus cytotoxicus (strain DSM 22905 / CIP 110041 / 391-98 / NVH 391-98)).